The primary structure comprises 239 residues: Ribosomal RNA small subunit methyltransferase G (239 aa).

S-adenosyl-L-methionine is bound by residues Gly78, Phe83, 129-130 (AE), and Arg148.

Belongs to the methyltransferase superfamily. RNA methyltransferase RsmG family.

It localises to the cytoplasm. Functionally, specifically methylates the N7 position of a guanine in 16S rRNA. In Clostridium botulinum (strain Loch Maree / Type A3), this protein is Ribosomal RNA small subunit methyltransferase G.